The chain runs to 90 residues: Small ribosomal subunit protein uS15c (90 aa).

Positions 1 to 11 (MVKNSFSSVIS) are enriched in polar residues. Residues 1–20 (MVKNSFSSVISQEEKKENGG) form a disordered region.

It belongs to the universal ribosomal protein uS15 family. In terms of assembly, part of the 30S ribosomal subunit.

The protein resides in the plastid. Its subcellular location is the chloroplast. In Cucumis sativus (Cucumber), this protein is Small ribosomal subunit protein uS15c (rps15).